We begin with the raw amino-acid sequence, 101 residues long: Protein SPIRAL1-like 3 (101 aa).

Residues 1 to 22 show a composition bias toward gly residues; that stretch reads MGRGVSSGGGQSSLGYLFGGGE. Disordered regions lie at residues 1-54 and 73-101; these read MGRG…GIQS and TDRP…KDGK.

Belongs to the SPIRAL1 family.

In terms of biological role, acts in maintaining the cortical microtubules organization essential for anisotropic cell growth. The polypeptide is Protein SPIRAL1-like 3 (Oryza sativa subsp. japonica (Rice)).